The following is an 86-amino-acid chain: Conotoxin Ec15a (86 aa).

Residues 1-23 (MEKLTILILVATVLLAIQVLGQG) form the signal peptide. A propeptide spanning residues 24–49 (EGEKPPKEWVQQYAAKRLWALMKGPR) is cleaved from the precursor. Glutamine 50 is subject to Pyrrolidone carboxylic acid.

It belongs to the conotoxin O2 superfamily. Contains 4 disulfide bonds. Expressed by the venom duct.

Its subcellular location is the secreted. The polypeptide is Conotoxin Ec15a (Conus emaciatus (False virgin cone)).